A 251-amino-acid polypeptide reads, in one-letter code: NADH-quinone oxidoreductase subunit B (251 aa).

Residues Cys38, Cys39, Cys104, and Cys134 each coordinate [4Fe-4S] cluster. The tract at residues 208–251 is disordered; it reads RKGLPPGSMTDVGWIPPEARERLKAGRGAGASGSGEREEGKEGA. Over residues 242–251 the composition is skewed to basic and acidic residues; sequence GEREEGKEGA.

Belongs to the complex I 20 kDa subunit family. In terms of assembly, NDH-1 is composed of 14 different subunits. Subunits NuoB, C, D, E, F, and G constitute the peripheral sector of the complex. [4Fe-4S] cluster serves as cofactor.

It localises to the cell membrane. It catalyses the reaction a quinone + NADH + 5 H(+)(in) = a quinol + NAD(+) + 4 H(+)(out). Functionally, NDH-1 shuttles electrons from NADH, via FMN and iron-sulfur (Fe-S) centers, to quinones in the respiratory chain. The immediate electron acceptor for the enzyme in this species is believed to be a menaquinone. Couples the redox reaction to proton translocation (for every two electrons transferred, four hydrogen ions are translocated across the cytoplasmic membrane), and thus conserves the redox energy in a proton gradient. This chain is NADH-quinone oxidoreductase subunit B, found in Rubrobacter xylanophilus (strain DSM 9941 / JCM 11954 / NBRC 16129 / PRD-1).